A 108-amino-acid chain; its full sequence is Large ribosomal subunit protein uL24 (108 aa).

The protein belongs to the universal ribosomal protein uL24 family. As to quaternary structure, part of the 50S ribosomal subunit.

Functionally, one of two assembly initiator proteins, it binds directly to the 5'-end of the 23S rRNA, where it nucleates assembly of the 50S subunit. Its function is as follows. One of the proteins that surrounds the polypeptide exit tunnel on the outside of the subunit. The chain is Large ribosomal subunit protein uL24 from Salinispora tropica (strain ATCC BAA-916 / DSM 44818 / JCM 13857 / NBRC 105044 / CNB-440).